The following is a 479-amino-acid chain: Protein C-ets-2 (479 aa).

Residues 88-173 (DTFSGFTKEQ…EHLEQMIKDS (86 aa)) form the PNT domain. Positions 373–453 (IQLWQFLLEL…SGKRYVYRFV (81 aa)) form a DNA-binding region, ETS.

It belongs to the ETS family.

It is found in the nucleus. Functionally, probable transcription factor. This Gallus gallus (Chicken) protein is Protein C-ets-2 (ETS2).